The following is a 407-amino-acid chain: Melanoma-associated antigen B6B (407 aa).

Basic residues predominate over residues 1–16 (MPRGQKSKLRARGKRR). Residues 1-185 (MPRGQKSKLR…ESLSSSKRAA (185 aa)) form a disordered region. Composition is skewed to polar residues over residues 56-68 (SGSS…QGAS) and 94-109 (PSTS…SQGA). Residues 123–132 (KSDEAAKGQN) are compositionally biased toward basic and acidic residues. Residues 133-155 (EKSPSTSRDASVPQESQGASPTG) show a composition bias toward polar residues. Residues 195 to 394 (IKRKANKMVQ…GLYPHLYEDA (200 aa)) form the MAGE domain.

The polypeptide is Melanoma-associated antigen B6B (Homo sapiens (Human)).